Consider the following 296-residue polypeptide: Transposase for insertion sequence element IST2 (296 aa).

Belongs to the transposase mutator family.

Required for the transposition of the insertion element. This is Transposase for insertion sequence element IST2 from Acidithiobacillus ferrooxidans (Thiobacillus ferrooxidans).